The sequence spans 98 residues: NADH-ubiquinone oxidoreductase chain 4L (98 aa).

2 helical membrane passes run 1–21 (MTLI…GLAL) and 48–68 (PLHL…PFAA).

Belongs to the complex I subunit 4L family. As to quaternary structure, core subunit of respiratory chain NADH dehydrogenase (Complex I) which is composed of 45 different subunits.

The protein localises to the mitochondrion inner membrane. The enzyme catalyses a ubiquinone + NADH + 5 H(+)(in) = a ubiquinol + NAD(+) + 4 H(+)(out). Core subunit of the mitochondrial membrane respiratory chain NADH dehydrogenase (Complex I) which catalyzes electron transfer from NADH through the respiratory chain, using ubiquinone as an electron acceptor. Part of the enzyme membrane arm which is embedded in the lipid bilayer and involved in proton translocation. The chain is NADH-ubiquinone oxidoreductase chain 4L (mt-nd4l) from Xenopus laevis (African clawed frog).